Consider the following 678-residue polypeptide: DNA ligase (678 aa).

NAD(+) contacts are provided by residues D47–D51, S96–L97, and E122. Residue K124 is the N6-AMP-lysine intermediate of the active site. Residues R145, E182, K300, and K324 each coordinate NAD(+). Positions 418, 421, 436, and 442 each coordinate Zn(2+). The region spanning A602–L678 is the BRCT domain.

It belongs to the NAD-dependent DNA ligase family. LigA subfamily. The cofactor is Mg(2+). Mn(2+) is required as a cofactor.

The catalysed reaction is NAD(+) + (deoxyribonucleotide)n-3'-hydroxyl + 5'-phospho-(deoxyribonucleotide)m = (deoxyribonucleotide)n+m + AMP + beta-nicotinamide D-nucleotide.. Its function is as follows. DNA ligase that catalyzes the formation of phosphodiester linkages between 5'-phosphoryl and 3'-hydroxyl groups in double-stranded DNA using NAD as a coenzyme and as the energy source for the reaction. It is essential for DNA replication and repair of damaged DNA. In Francisella tularensis subsp. novicida (strain U112), this protein is DNA ligase.